The sequence spans 343 residues: N-acetyl-gamma-glutamyl-phosphate reductase (343 aa).

C146 is an active-site residue.

The protein belongs to the NAGSA dehydrogenase family. Type 1 subfamily.

The protein resides in the cytoplasm. The enzyme catalyses N-acetyl-L-glutamate 5-semialdehyde + phosphate + NADP(+) = N-acetyl-L-glutamyl 5-phosphate + NADPH + H(+). The protein operates within amino-acid biosynthesis; L-arginine biosynthesis; N(2)-acetyl-L-ornithine from L-glutamate: step 3/4. Its function is as follows. Catalyzes the NADPH-dependent reduction of N-acetyl-5-glutamyl phosphate to yield N-acetyl-L-glutamate 5-semialdehyde. The chain is N-acetyl-gamma-glutamyl-phosphate reductase from Pseudarthrobacter chlorophenolicus (strain ATCC 700700 / DSM 12829 / CIP 107037 / JCM 12360 / KCTC 9906 / NCIMB 13794 / A6) (Arthrobacter chlorophenolicus).